A 133-amino-acid polypeptide reads, in one-letter code: MRHYEIVFMVHPDQSEQVPGMIERYTTILKQDGGQVHRLEDWGRRQLAYPIEKLHKAHYVLINAEATAEAVDELENAFRFNDVILRNMVMRTKTAVTEPSPMMKEEPRRERRDDSAPRQERAEKKTETTEDNA.

The disordered stretch occupies residues 93 to 133; it reads KTAVTEPSPMMKEEPRRERRDDSAPRQERAEKKTETTEDNA. A compositionally biased stretch (basic and acidic residues) spans 103–133; sequence MKEEPRRERRDDSAPRQERAEKKTETTEDNA.

The protein belongs to the bacterial ribosomal protein bS6 family.

Functionally, binds together with bS18 to 16S ribosomal RNA. The chain is Small ribosomal subunit protein bS6 from Alteromonas mediterranea (strain DSM 17117 / CIP 110805 / LMG 28347 / Deep ecotype).